The sequence spans 331 residues: Gem-associated protein 2 (331 aa).

3 disordered regions span residues 1–23 (MDEFQSKAFEVGEEIEPDDNEPL), 101–130 (SNRPSNNNNNNNNNNNNNNNNNNNNNLIPQ), and 151–222 (NNNN…TKKP). Positions 11-21 (VGEEIEPDDNE) are enriched in acidic residues. Over residues 106–126 (NNNNNNNNNNNNNNNNNNNNN) the composition is skewed to low complexity. Residues 165–215 (DNQEDDDDDENNEDYEYNENKEEEEEEEEEEEEEEEVEEEEEEEEEEEEVV) show a composition bias toward acidic residues. A coiled-coil region spans residues 173–224 (DENNEDYEYNENKEEEEEEEEEEEEEEEVEEEEEEEEEEEEVVDYSTKKPTL).

This sequence belongs to the gemin-2 family.

The protein resides in the nucleus. The protein localises to the gem. It localises to the cytoplasm. Functionally, the SMN complex catalyzes the assembly of small nuclear ribonucleoproteins (snRNPs), the building blocks of the spliceosome, and thereby plays an important role in the splicing of cellular pre-mRNAs. Most spliceosomal snRNPs contain a common set of Sm proteins SNRPB, SNRPD1, SNRPD2, SNRPD3, SNRPE, SNRPF and SNRPG that assemble in a heptameric protein ring on the Sm site of the small nuclear RNA to form the core snRNP (Sm core). In the cytosol, the Sm proteins SNRPD1, SNRPD2, SNRPE, SNRPF and SNRPG (5Sm) are trapped in an inactive 6S pICln-Sm complex by the chaperone CLNS1A that controls the assembly of the core snRNP. To assemble core snRNPs, the SMN complex accepts the trapped 5Sm proteins from CLNS1A. Binding of snRNA inside 5Sm ultimately triggers eviction of the SMN complex, thereby allowing binding of SNRPD3 and SNRPB to complete assembly of the core snRNP. Within the SMN complex, GEMIN2 constrains the conformation of 5Sm, thereby promoting 5Sm binding to snRNA containing the snRNP code (a nonameric Sm site and a 3'-adjacent stem-loop), thus preventing progression of assembly until a cognate substrate is bound. In terms of biological role, may play an essential role in spliceosomal snRNP assembly in the cytoplasm and may be required for pre-mRNA splicing in the nucleus. This chain is Gem-associated protein 2 (gemin2), found in Dictyostelium discoideum (Social amoeba).